Consider the following 392-residue polypeptide: Acetyl-CoA acetyltransferase (392 aa).

Cys85 acts as the Acyl-thioester intermediate in catalysis. CoA is bound by residues Cys206, Ser207, Val209, and Lys332. The Proton acceptor role is filled by His336.

The protein belongs to the thiolase-like superfamily. Thiolase family. In terms of assembly, interacts with HMG-CoA synthase (HMGCS) that catalyzes the second step in the pathway and with a DUF35 protein. The acetoacetyl-CoA thiolase/HMG-CoA synthase complex channels the intermediate via a fused CoA-binding site, which allows for efficient coupling of the endergonic thiolase reaction with the exergonic HMGCS reaction.

It catalyses the reaction 2 acetyl-CoA = acetoacetyl-CoA + CoA. It participates in metabolic intermediate biosynthesis; (R)-mevalonate biosynthesis; (R)-mevalonate from acetyl-CoA: step 1/3. Its function is as follows. Catalyzes the condensation of two acetyl-coA molecules into acetoacetyl-CoA. Functions in the mevalonate (MVA) pathway leading to isopentenyl diphosphate (IPP), a key precursor for the biosynthesis of isoprenoid compounds that are building blocks of archaeal membrane lipids. In Methanothermococcus thermolithotrophicus (Methanococcus thermolithotrophicus), this protein is Acetyl-CoA acetyltransferase.